The chain runs to 364 residues: SVP1-like protein 2 (364 aa).

WD repeat units follow at residues 173–213 (AHDS…KICE) and 218–257 (YQHT…NTIR).

This sequence belongs to the WD repeat PROPPIN family.

It localises to the vacuole membrane. The protein resides in the cytoplasmic vesicle membrane. It is found in the preautophagosomal structure membrane. Functionally, involved in mitochondrial or peroxisomal functions and amino acid signaling pathways. This Schizosaccharomyces pombe (strain 972 / ATCC 24843) (Fission yeast) protein is SVP1-like protein 2 (hsv2).